We begin with the raw amino-acid sequence, 293 residues long: N(1)-aminopropylagmatine ureohydrolase (293 aa).

Mn(2+) contacts are provided by H105, D128, H130, D132, D210, and D212.

Belongs to the arginase family. It depends on Mn(2+) as a cofactor.

It localises to the cytoplasm. The enzyme catalyses N(1)-(3-aminopropyl)agmatine + H2O = urea + spermidine. It functions in the pathway amine and polyamine biosynthesis; spermidine biosynthesis. Involved in the biosynthesis of polyamines which are thought to support the growth of thermophilic microorganisms under high-temperature conditions. It seems that long-chain and branched-chain of polyamines effectively stabilize DNA and RNA, respectively. Catalyzes the decarboxylation of N1-(3-aminopropyl)agmatine to yield spermidine and urea. It cannot use agmatine as substrate. In Thermus thermophilus (strain ATCC 27634 / DSM 579 / HB8), this protein is N(1)-aminopropylagmatine ureohydrolase.